Reading from the N-terminus, the 565-residue chain is NAD-dependent malic enzyme (565 aa).

Tyrosine 104 acts as the Proton donor in catalysis. Arginine 157 serves as a coordination point for NAD(+). Catalysis depends on lysine 175, which acts as the Proton acceptor. A divalent metal cation contacts are provided by glutamate 246, aspartate 247, and aspartate 270. The NAD(+) site is built by aspartate 270 and asparagine 418.

The protein belongs to the malic enzymes family. In terms of assembly, homotetramer. Mg(2+) is required as a cofactor. Mn(2+) serves as cofactor.

The enzyme catalyses (S)-malate + NAD(+) = pyruvate + CO2 + NADH. It carries out the reaction oxaloacetate + H(+) = pyruvate + CO2. This is NAD-dependent malic enzyme from Yersinia enterocolitica serotype O:8 / biotype 1B (strain NCTC 13174 / 8081).